The chain runs to 73 residues: Disintegrin lutosin (73 aa).

A Disintegrin domain is found at 1 to 73 (EAGEECDCGS…ADCPRNGLYG (73 aa)). 6 cysteine pairs are disulfide-bonded: cysteine 6/cysteine 21, cysteine 8/cysteine 16, cysteine 15/cysteine 38, cysteine 29/cysteine 35, cysteine 34/cysteine 59, and cysteine 47/cysteine 66. A Cell attachment site motif is present at residues 51 to 53 (RGD).

This sequence belongs to the venom metalloproteinase (M12B) family. P-II subfamily. P-IIa sub-subfamily. In terms of assembly, monomer (disintegrin). In terms of tissue distribution, expressed by the venom gland.

It localises to the secreted. Its function is as follows. Inhibits fibrinogen interaction with platelets. Acts by binding to alpha-IIb/beta-3 (ITGA2B/ITGB3) on the platelet surface and inhibits aggregation induced by ADP, thrombin, platelet-activating factor and collagen. In Crotalus lutosus (Great basin rattlesnake), this protein is Disintegrin lutosin.